The sequence spans 120 residues: Large ribosomal subunit protein uL18 (120 aa).

It belongs to the universal ribosomal protein uL18 family. In terms of assembly, part of the 50S ribosomal subunit; part of the 5S rRNA/L5/L18/L25 subcomplex. Contacts the 5S and 23S rRNAs.

This is one of the proteins that bind and probably mediate the attachment of the 5S RNA into the large ribosomal subunit, where it forms part of the central protuberance. This Gluconacetobacter diazotrophicus (strain ATCC 49037 / DSM 5601 / CCUG 37298 / CIP 103539 / LMG 7603 / PAl5) protein is Large ribosomal subunit protein uL18.